The sequence spans 567 residues: MASSALICDTEQWKGLQAHVGAIQKTHLRDLMDDAERCKAMTAEYEGIFLDYSRQRATGETMEKLFKLAEAAKLKEKIEKMFSGDKINSTENRSVLHVALRAPRDEVIKSDGVNVVPEVWGVKDKIKQFSETFRSGSWVGATGKALTNVVSVGIGGSFLGPLFVHAALQTDPEAAESAKGRQLRFLANVDPVDVARSIKDLDPETTLVVVVSKTFTTAETMLNARTLKEWIVSSLGPDAVAKHMIAVSTNLELVEKFGIDPKNAFAFWDWVGGRYSVCSAVGVLPLSLQYGFPIVQKFLEGAASIDKHFRSSSFEKNIPVLLGLLSVWNVSFLGYPARAILPYSQALEKFAPHIQQLSMESNGKGVSIDGVQLSFETGEIDFGEPGTNGQHSFYQLIHQGRVIPCDFIGVVKSQQPVYLKGEIVSNHDELMSNFFAQPDALAYGKTPEQLHSEKVPEHLISHKTFQGNRPSLSLLLPSLSAYEIGQLLSIYEHRIAVQGFLWGINSFDQWGVELGKSLASQVRKSLHASRMEGKPVQGFNSSTASLLTRYLAVEPSTPYNTTTMPKV.

Residues 156–157 (GS), 212–217 (SKTFTT), Gln-356, Glu-360, His-391, and Lys-516 contribute to the D-glucose 6-phosphate site. The Proton donor role is filled by Glu-360. Residues His-391 and Lys-516 contribute to the active site.

It belongs to the GPI family. In terms of assembly, homodimer.

The protein resides in the cytoplasm. The catalysed reaction is alpha-D-glucose 6-phosphate = beta-D-fructose 6-phosphate. It participates in carbohydrate degradation; glycolysis; D-glyceraldehyde 3-phosphate and glycerone phosphate from D-glucose: step 2/4. Its function is as follows. Catalyzes the conversion of glucose-6-phosphate to fructose-6-phosphate, the second step in glycolysis, and the reverse reaction during gluconeogenesis. The chain is Glucose-6-phosphate isomerase, cytosolic B from Oryza sativa subsp. japonica (Rice).